A 156-amino-acid chain; its full sequence is Small ribosomal subunit protein uS7 (156 aa).

It belongs to the universal ribosomal protein uS7 family. As to quaternary structure, part of the 30S ribosomal subunit. Contacts proteins S9 and S11.

In terms of biological role, one of the primary rRNA binding proteins, it binds directly to 16S rRNA where it nucleates assembly of the head domain of the 30S subunit. Is located at the subunit interface close to the decoding center, probably blocks exit of the E-site tRNA. The polypeptide is Small ribosomal subunit protein uS7 (Methylorubrum extorquens (strain CM4 / NCIMB 13688) (Methylobacterium extorquens)).